We begin with the raw amino-acid sequence, 851 residues long: Alanine--tRNA ligase (851 aa).

4 residues coordinate Zn(2+): histidine 554, histidine 558, cysteine 656, and histidine 660.

This sequence belongs to the class-II aminoacyl-tRNA synthetase family. Requires Zn(2+) as cofactor.

Its subcellular location is the cytoplasm. The enzyme catalyses tRNA(Ala) + L-alanine + ATP = L-alanyl-tRNA(Ala) + AMP + diphosphate. In terms of biological role, catalyzes the attachment of alanine to tRNA(Ala) in a two-step reaction: alanine is first activated by ATP to form Ala-AMP and then transferred to the acceptor end of tRNA(Ala). Also edits incorrectly charged Ser-tRNA(Ala) and Gly-tRNA(Ala) via its editing domain. The protein is Alanine--tRNA ligase of Aliarcobacter butzleri (strain RM4018) (Arcobacter butzleri).